We begin with the raw amino-acid sequence, 2027 residues long: MLKFKYGARNPLDAGAAEPIASRASRLNLFFQGKPPFMTQQQMSPLSREGILDALFVLFEECSQPALMKIKHVSNFVRKYSDTIAELQELQPSAKDFEVRSLVGCGHFAEVQVVREKATGDIYAMKVMKKKALLAQEQVSFFEEERNILSRSTSPWIPQLQYAFQDKNHLYLVMEYQPGGDLLSLLNRYEDQLDENLIQFYLAELILAVHSVHLMGYVHRDIKPENILVDRTGHIKLVDFGSAAKMNSNKMVNAKLPIGTPDYMAPEVLTVMNGDGKGTYGLDCDWWSVGVIAYEMIYGRSPFAEGTSARTFNNIMNFQRFLKFPDDPKVSSDFLDLIQSLLCGQKERLKFEGLCCHPFFSKIDWNNIRNSPPPFVPTLKSDDDTSNFDEPEKNSWVSSSPCQLSPSGFSGEELPFVGFSYSKALGILGRSESVVSGLDSPAKTSSMEKKLLIKSKELQDSQDKCHKMEQEMTRLHRRVSEVEAVLSQKEVELKASETQRSLLEQDLATYITECSSLKRSLEQARMEVSQEDDKALQLLHDIREQSRKLQEIKEQEYQAQVEEMRLMMNQLEEDLVSARRRSDLYESELRESRLAAEEFKRKATECQHKLLKAKDQGKPEVGEYAKLEKINAEQQLKIQELQEKLEKAVKASTEATELLQNIRQAKERAERELEKLQNREDSSEGIRKKLVEAEELEEKHREAQVSAQHLEVHLKQKEQHYEEKIKVLDNQIKKDLADKETLENMMQRHEEEAHEKGKILSEQKAMINAMDSKIRSLEQRIVELSEANKLAANSSLFTQRNMKAQEEMISELRQQKFYLETQAGKLEAQNRKLEEQLEKISHQDHSDKNRLLELETRLREVSLEHEEQKLELKRQLTELQLSLQERESQLTALQAARAALESQLRQAKTELEETTAEAEEEIQALTAHRDEIQRKFDALRNSCTVITDLEEQLNQLTEDNAELNNQNFYLSKQLDEASGANDEIVQLRSEVDHLRREITEREMQLTSQKQTMEALKTTCTMLEEQVMDLEALNDELLEKERQWEAWRSVLGDEKSQFECRVRELQRMLDTEKQSRARADQRITESRQVVELAVKEHKAEILALQQALKEQKLKAESLSDKLNDLEKKHAMLEMNARSLQQKLETERELKQRLLEEQAKLQQQMDLQKNHIFRLTQGLQEALDRADLLKTERSDLEYQLENIQVLYSHEKVKMEGTISQQTKLIDFLQAKMDQPAKKKKGLFSRRKEDPALPTQVPLQYNELKLALEKEKARCAELEEALQKTRIELRSAREEAAHRKATDHPHPSTPATARQQIAMSAIVRSPEHQPSAMSLLAPPSSRRKESSTPEEFSRRLKERMHHNIPHRFNVGLNMRATKCAVCLDTVHFGRQASKCLECQVMCHPKCSTCLPATCGLPAEYATHFTEAFCRDKMNSPGLQTKEPSSSLHLEGWMKVPRNNKRGQQGWDRKYIVLEGSKVLIYDNEAREAGQRPVEEFELCLPDGDVSIHGAVGASELANTAKADVPYILKMESHPHTTCWPGRTLYLLAPSFPDKQRWVTALESVVAGGRVSREKAEADAKLLGNSLLKLEGDDRLDMNCTLPFSDQVVLVGTEEGLYALNVLKNSLTHVPGIGAVFQIYIIKDLEKLLMIAGEERALCLVDVKKVKQSLAQSHLPAQPDISPNIFEAVKGCHLFGAGKIENGLCICAAMPSKVVILRYNENLSKYCIRKEIETSEPCSCIHFTNYSILIGTNKFYEIDMKQYTLEEFLDKNDHSLAPAVFAASSNSFPVSIVQVNSAGQREEYLLCFHEFGVFVDSYGRRSRTDDLKWSRLPLAFAYREPYLFVTHFNSLEVIEIQARSSAGTPARAYLDIPNPRYLGPAISSGAIYLASSYQDKLRVICCKGNLVKESGTEHHRGPSTSRSSPNKRGPPTYNEHITKRVASSPAPPEGPSHPREPSTPHRYREGRTELRRDKSPGRPLEREKSPGRMLSTRRERSPGRLFEDSSRGRLPAGAVRTPLSQVNKVWDQSSV.

Position 1 is an N-acetylmethionine (Met-1). One can recognise a Protein kinase domain in the interval 97 to 360 (FEVRSLVGCG…FEGLCCHPFF (264 aa)). Residues 103–111 (VGCGHFAEV) and Lys-126 each bind ATP. Asp-221 serves as the catalytic Proton acceptor. An AGC-kinase C-terminal domain is found at 361-431 (SKIDWNNIRN…SKALGILGRS (71 aa)). A phosphoserine mark is found at Ser-433, Ser-440, Ser-480, and Ser-582. A coiled-coil region spans residues 453–1297 (IKSKELQDSQ…SAREEAAHRK (845 aa)). The segment at 1091 to 1302 (LAVKEHKAEI…AAHRKATDHP (212 aa)) is interaction with Rho/Rac. A Phosphotyrosine modification is found at Tyr-1196. A compositionally biased stretch (basic and acidic residues) spans 1290–1303 (REEAAHRKATDHPH). Disordered regions lie at residues 1290 to 1310 (REEA…PATA) and 1322 to 1351 (SPEH…EFSR). Over residues 1327–1337 (PSAMSLLAPPS) the composition is skewed to low complexity. Residues 1339 to 1351 (RRKESSTPEEFSR) are compositionally biased toward basic and acidic residues. Residues 1362–1411 (PHRFNVGLNMRATKCAVCLDTVHFGRQASKCLECQVMCHPKCSTCLPATC) form a Phorbol-ester/DAG-type zinc finger. In terms of domain architecture, PH spans 1443-1563 (SLHLEGWMKV…WVTALESVVA (121 aa)). The region spanning 1591–1881 (RLDMNCTLPF…RYLGPAISSG (291 aa)) is the CNH domain. Position 1721 is an N6-acetyllysine (Lys-1721). The disordered stretch occupies residues 1905–2012 (ESGTEHHRGP…RGRLPAGAVR (108 aa)). Position 1940 is a phosphoserine (Ser-1940). The span at 1948–2003 (SHPREPSTPHRYREGRTELRRDKSPGRPLEREKSPGRMLSTRRERSPGRLFEDSSR) shows a compositional bias: basic and acidic residues. The short motif at 1953-1958 (PSTPHR) is the SH3-binding element. Position 1993 is a phosphoserine (Ser-1993). A Phosphothreonine modification is found at Thr-2013.

It belongs to the protein kinase superfamily. AGC Ser/Thr protein kinase family. In terms of assembly, directly interacts with KIF14 depending on the activation state (stronger interaction with the kinase-dead form). Homodimer. Interacts with TTC3.

The protein resides in the cytoplasm. It carries out the reaction L-seryl-[protein] + ATP = O-phospho-L-seryl-[protein] + ADP + H(+). The catalysed reaction is L-threonyl-[protein] + ATP = O-phospho-L-threonyl-[protein] + ADP + H(+). Plays a role in cytokinesis. Required for KIF14 localization to the central spindle and midbody. Putative RHO/RAC effector that binds to the GTP-bound forms of RHO and RAC1. It probably binds p21 with a tighter specificity in vivo. Displays serine/threonine protein kinase activity. Plays an important role in the regulation of cytokinesis and the development of the central nervous system. Phosphorylates MYL9/MLC2. In Homo sapiens (Human), this protein is Citron Rho-interacting kinase (CIT).